Reading from the N-terminus, the 968-residue chain is Isoleucine--tRNA ligase (968 aa).

Residues 68–78 (PYANGALHMGH) carry the 'HIGH' region motif. L-isoleucyl-5'-AMP is bound at residue glutamate 582. The 'KMSKS' region motif lies at 623–627 (KMSKS). ATP is bound at residue lysine 626. The Zn(2+) site is built by cysteine 936, cysteine 939, cysteine 956, and cysteine 959.

Belongs to the class-I aminoacyl-tRNA synthetase family. IleS type 1 subfamily. In terms of assembly, monomer. Zn(2+) is required as a cofactor.

Its subcellular location is the cytoplasm. It catalyses the reaction tRNA(Ile) + L-isoleucine + ATP = L-isoleucyl-tRNA(Ile) + AMP + diphosphate. Catalyzes the attachment of isoleucine to tRNA(Ile). As IleRS can inadvertently accommodate and process structurally similar amino acids such as valine, to avoid such errors it has two additional distinct tRNA(Ile)-dependent editing activities. One activity is designated as 'pretransfer' editing and involves the hydrolysis of activated Val-AMP. The other activity is designated 'posttransfer' editing and involves deacylation of mischarged Val-tRNA(Ile). This chain is Isoleucine--tRNA ligase, found in Prochlorococcus marinus (strain MIT 9301).